Reading from the N-terminus, the 900-residue chain is Peroxisomal hydratase-dehydrogenase-epimerase (900 aa).

Short-chain dehydrogenase like stretches follow at residues Ser-6 to Ser-230 and Ser-319 to Glu-535. Residues Ile-14, Lys-53, Asn-100, Arg-133, Tyr-165, and Lys-169 each contribute to the NADP(+) site. The active-site Proton donor is the Tyr-165. Lys-169 (lowers pKa of active site Tyr) is an active-site residue. The (3R)-3-hydroxydecanoyl-CoA site is built by His-689, Gly-690, Lys-719, Asp-803, Asn-805, Gly-826, Phe-851, and Thr-852. Positions Glu-775–Asp-887 constitute a MaoC-like domain. The Microbody targeting signal signature appears at Ser-898–Leu-900.

Belongs to the short-chain dehydrogenases/reductases (SDR) family. As to quaternary structure, monomer.

It is found in the peroxisome. It catalyses the reaction a (3R)-3-hydroxyacyl-CoA = a (2E)-enoyl-CoA + H2O. The catalysed reaction is a (3R)-3-hydroxyacyl-CoA + NAD(+) = a 3-oxoacyl-CoA + NADH + H(+). Its pathway is lipid metabolism; fatty acid beta-oxidation. Its function is as follows. Second trifunctional enzyme acting on the beta-oxidation pathway for fatty acids, possessing hydratase-dehydrogenase-epimerase activities. Converts trans-2-enoyl-CoA via D-3-hydroxyacyl-CoA to 3-ketoacyl-CoA. In Saccharomyces cerevisiae (strain ATCC 204508 / S288c) (Baker's yeast), this protein is Peroxisomal hydratase-dehydrogenase-epimerase (FOX2).